An 80-amino-acid polypeptide reads, in one-letter code: Clavanin-A (80 aa).

The signal sequence occupies residues 1-19 (MKTTILILLILGLGINAKS). The propeptide occupies 20–29 (LEERKSEEEK). Phenylalanine 52 is subject to Phenylalanine amide. A propeptide spanning residues 54–80 (DDQQDNGKFYGHYAEDNGKHWYDTGDQ) is cleaved from the precursor.

The protein localises to the secreted. Its function is as follows. Has antimicrobial activity. This Styela clava (Sea squirt) protein is Clavanin-A.